The primary structure comprises 273 residues: Ribosomal RNA small subunit methyltransferase A (273 aa).

The S-adenosyl-L-methionine site is built by Asn-18, Leu-20, Gly-45, Glu-66, Asp-91, and Asn-113.

This sequence belongs to the class I-like SAM-binding methyltransferase superfamily. rRNA adenine N(6)-methyltransferase family. RsmA subfamily.

The protein localises to the cytoplasm. The catalysed reaction is adenosine(1518)/adenosine(1519) in 16S rRNA + 4 S-adenosyl-L-methionine = N(6)-dimethyladenosine(1518)/N(6)-dimethyladenosine(1519) in 16S rRNA + 4 S-adenosyl-L-homocysteine + 4 H(+). Its function is as follows. Specifically dimethylates two adjacent adenosines (A1518 and A1519) in the loop of a conserved hairpin near the 3'-end of 16S rRNA in the 30S particle. May play a critical role in biogenesis of 30S subunits. The polypeptide is Ribosomal RNA small subunit methyltransferase A (Escherichia coli (strain SE11)).